Reading from the N-terminus, the 85-residue chain is DNA-directed RNA polymerase subunit Rpo11 (85 aa).

It belongs to the archaeal Rpo11/eukaryotic RPB11/RPC19 RNA polymerase subunit family. Part of the RNA polymerase complex.

The protein resides in the cytoplasm. It catalyses the reaction RNA(n) + a ribonucleoside 5'-triphosphate = RNA(n+1) + diphosphate. Functionally, DNA-dependent RNA polymerase (RNAP) catalyzes the transcription of DNA into RNA using the four ribonucleoside triphosphates as substrates. In Methanothermobacter thermautotrophicus (strain ATCC 29096 / DSM 1053 / JCM 10044 / NBRC 100330 / Delta H) (Methanobacterium thermoautotrophicum), this protein is DNA-directed RNA polymerase subunit Rpo11.